The sequence spans 505 residues: Ribose import ATP-binding protein RbsA (505 aa).

2 consecutive ABC transporter domains span residues 12 to 249 and 259 to 504; these read LQMK…VGRK and VKKG…VAFS. Position 44–51 (44–51) interacts with ATP; that stretch reads GENGAGKS.

The protein belongs to the ABC transporter superfamily. Ribose importer (TC 3.A.1.2.1) family. In terms of assembly, the complex is composed of an ATP-binding protein (RbsA), two transmembrane proteins (RbsC) and a solute-binding protein (RbsB).

It is found in the cell membrane. The catalysed reaction is D-ribose(out) + ATP + H2O = D-ribose(in) + ADP + phosphate + H(+). Functionally, part of the ABC transporter complex RbsABC involved in ribose import. Responsible for energy coupling to the transport system. This Clostridium tetani (strain Massachusetts / E88) protein is Ribose import ATP-binding protein RbsA.